Reading from the N-terminus, the 429-residue chain is SET domain-containing protein 8 (429 aa).

Positions 17 to 232 (KQITIKKIRK…ENEEVTINYG (216 aa)) constitute an SET domain.

It belongs to the class V-like SAM-binding methyltransferase superfamily.

The protein resides in the cytoplasm. It is found in the nucleus. The protein is SET domain-containing protein 8 (set8) of Schizosaccharomyces pombe (strain 972 / ATCC 24843) (Fission yeast).